The sequence spans 463 residues: NADH dehydrogenase [ubiquinone] iron-sulfur protein 2, mitochondrial (463 aa).

A mitochondrion-targeting transit peptide spans 1–33 (MAALRALCRLRGAAAQVLRPGAGVRLPIQPSRG). K62 is subject to N6-acetyllysine. R118 bears the Symmetric dimethylarginine mark. The [4Fe-4S] cluster site is built by C326, C332, and C347.

The protein belongs to the complex I 49 kDa subunit family. Core subunit of respiratory chain NADH dehydrogenase (Complex I) which is composed of 45 different subunits. Component of the iron-sulfur (IP) fragment of the enzyme. Interacts with NDUFAF3. Interacts with NDUFAF7. Interacts with CERS2. It depends on [4Fe-4S] cluster as a cofactor. Dimethylation at Arg-118 by NDUFAF7 takes place after NDUFS2 assembles into the complex I, leading to stabilize the early intermediate complex.

Its subcellular location is the mitochondrion inner membrane. It carries out the reaction a ubiquinone + NADH + 5 H(+)(in) = a ubiquinol + NAD(+) + 4 H(+)(out). In terms of biological role, core subunit of the mitochondrial membrane respiratory chain NADH dehydrogenase (Complex I) which catalyzes electron transfer from NADH through the respiratory chain, using ubiquinone as an electron acceptor. Essential for the catalytic activity and assembly of complex I. Redox-sensitive, critical component of the oxygen-sensing pathway in the pulmonary vasculature which plays a key role in acute pulmonary oxygen-sensing and hypoxic pulmonary vasoconstriction. Plays an important role in carotid body sensing of hypoxia. Essential for glia-like neural stem and progenitor cell proliferation, differentiation and subsequent oligodendrocyte or neuronal maturation. The protein is NADH dehydrogenase [ubiquinone] iron-sulfur protein 2, mitochondrial (NDUFS2) of Bos taurus (Bovine).